The sequence spans 191 residues: FMN-dependent NADH:quinone oxidoreductase 1 (191 aa).

FMN is bound by residues serine 10 and 16–18 (SVS).

This sequence belongs to the azoreductase type 1 family. In terms of assembly, homodimer. It depends on FMN as a cofactor.

It carries out the reaction 2 a quinone + NADH + H(+) = 2 a 1,4-benzosemiquinone + NAD(+). The enzyme catalyses N,N-dimethyl-1,4-phenylenediamine + anthranilate + 2 NAD(+) = 2-(4-dimethylaminophenyl)diazenylbenzoate + 2 NADH + 2 H(+). In terms of biological role, quinone reductase that provides resistance to thiol-specific stress caused by electrophilic quinones. Its function is as follows. Also exhibits azoreductase activity. Catalyzes the reductive cleavage of the azo bond in aromatic azo compounds to the corresponding amines. The chain is FMN-dependent NADH:quinone oxidoreductase 1 from Jannaschia sp. (strain CCS1).